The following is a 400-amino-acid chain: tRNA(Ile)-lysidine synthase (400 aa).

25 to 30 is an ATP binding site; the sequence is SGGVDS.

The protein belongs to the tRNA(Ile)-lysidine synthase family.

It is found in the cytoplasm. The enzyme catalyses cytidine(34) in tRNA(Ile2) + L-lysine + ATP = lysidine(34) in tRNA(Ile2) + AMP + diphosphate + H(+). Ligates lysine onto the cytidine present at position 34 of the AUA codon-specific tRNA(Ile) that contains the anticodon CAU, in an ATP-dependent manner. Cytidine is converted to lysidine, thus changing the amino acid specificity of the tRNA from methionine to isoleucine. This Francisella philomiragia subsp. philomiragia (strain ATCC 25017 / CCUG 19701 / FSC 153 / O#319-036) protein is tRNA(Ile)-lysidine synthase.